Reading from the N-terminus, the 146-residue chain is Globin-2B (146 aa).

A Globin domain is found at 9–146 (QLTADVKKDL…KLVGVVQAAL (138 aa)). Histidine 101 serves as a coordination point for heme b.

The protein belongs to the globin family. Homodimer.

The sequence is that of Globin-2B from Anadara trapezia (Sydney cockle).